Reading from the N-terminus, the 291-residue chain is Proteasomal ubiquitin receptor ADRM1 homolog rpn1301 (291 aa).

In terms of domain architecture, Pru spans 1 to 114 (MSLITFKAGK…ERINSYIKDQ (114 aa)). The disordered stretch occupies residues 135-162 (TVEQSEPIAQPTESSKESSEIGAPNSDE). The region spanning 178 to 290 (AQAGFGGSTV…ARFVSRNNGS (113 aa)) is the DEUBAD domain.

Belongs to the ADRM1 family. As to quaternary structure, component of the 19S proteasome regulatory particle complex. The 2 S.pombe rpn13 homologs, rpn1301 and rpn1302 are present at a 0.2-1 ratio.

The protein resides in the cytoplasm. It is found in the nucleus. In terms of biological role, component of the 26S proteasome, a multiprotein complex involved in the ATP-dependent degradation of ubiquitinated proteins. This complex plays a key role in the maintenance of protein homeostasis by removing misfolded or damaged proteins, which could impair cellular functions, and by removing proteins whose functions are no longer required. Therefore, the proteasome participates in numerous cellular processes, including cell cycle progression, apoptosis, or DNA damage repair. Within the complex, functions as a proteasomal ubiquitin receptor. The chain is Proteasomal ubiquitin receptor ADRM1 homolog rpn1301 (rpn1301) from Schizosaccharomyces pombe (strain 972 / ATCC 24843) (Fission yeast).